The sequence spans 147 residues: 3-dehydroquinate dehydratase 1 (147 aa).

The Proton acceptor role is filled by Y23. Residues N75, H81, and D88 each contribute to the substrate site. Catalysis depends on H101, which acts as the Proton donor. Substrate is bound by residues 102-103 and R112; that span reads LS.

This sequence belongs to the type-II 3-dehydroquinase family. In terms of assembly, homododecamer.

It catalyses the reaction 3-dehydroquinate = 3-dehydroshikimate + H2O. It functions in the pathway metabolic intermediate biosynthesis; chorismate biosynthesis; chorismate from D-erythrose 4-phosphate and phosphoenolpyruvate: step 3/7. In terms of biological role, catalyzes a trans-dehydration via an enolate intermediate. In Pseudomonas aeruginosa (strain ATCC 15692 / DSM 22644 / CIP 104116 / JCM 14847 / LMG 12228 / 1C / PRS 101 / PAO1), this protein is 3-dehydroquinate dehydratase 1 (aroQ1).